Here is a 208-residue protein sequence, read N- to C-terminus: MSAGGDFGNPLRKFKLVFLGEQSVGKTSLITRFMYDSFDNTYQATIGIDFLSKTMYLEDRTVRLQLWDTAGQERFRSLIPSYIRDSTVAVVVYDITNLNSFQQTSKWIDDVRTERGSDVIIMLVGNKTDLADKRQITIEEGEQRAKELSVMFIETSAKTGYNVKQLFRRVASALPGMENVQEKSKEGMIDIKLDKPQEPPASEGGCSC.

Residues 20–27 (GEQSVGKT), Thr45, 68–72 (DTAGQ), and 126–129 (NKTD) each bind GTP. The Effector region motif lies at 42-50 (YQATIGIDF). 2 S-geranylgeranyl cysteine lipidation sites follow: Cys206 and Cys208. Residue Cys208 is modified to Cysteine methyl ester.

The protein belongs to the small GTPase superfamily. Rab family. As to quaternary structure, interacts (GTP-bound) with BICD1 (via C-terminus); the interaction is direct. Interacts (GDP-bound) with DYNLRB1. Interacts (GTP-bound) with APBA1/MINT1. Interacts (GTP-bound) with VPS13B.

The protein localises to the golgi apparatus membrane. Its subcellular location is the endoplasmic reticulum-Golgi intermediate compartment. It is found in the cytoplasmic vesicle. The enzyme catalyses GTP + H2O = GDP + phosphate + H(+). Its activity is regulated as follows. Regulated by guanine nucleotide exchange factors (GEFs) which promote the exchange of bound GDP for free GTP, GTPase activating proteins (GAPs) which increase the GTP hydrolysis activity, and GDP dissociation inhibitors which inhibit the dissociation of the nucleotide from the GTPase. Functionally, the small GTPases Rab are key regulators of intracellular membrane trafficking, from the formation of transport vesicles to their fusion with membranes. Rabs cycle between active GTP-bound and inactive GDP-bound states. In their active state, drive transport of vesicular carriers from donor organelles to acceptor organelles to regulate the membrane traffic that maintains organelle identity and morphology. Recruits VPS13B to the Golgi membrane. Regulates the compacted morphology of the Golgi. Seems to have a role in retrograde membrane traffic at the level of the Golgi complex. May function in retrograde transport in neuronal cells. Plays a role in neuron projection development. The chain is Ras-related protein Rab-6B (RAB6B) from Bos taurus (Bovine).